We begin with the raw amino-acid sequence, 252 residues long: MVKVVVSGALGRMGTNIGRIVDEAPDMELVGGIDVREGTLFKTEVVPAAKIDAFLNEKKPDVLIDFTVAGAAVENIKAAARNGVALIVGTTGFSPEQRETIAAAVEGNVPAVISSNFSVGVNIFWKLVREAARELGDYDVEVTEAHHRYKKDAPSGTAKTILEILDQELGSREKAYGRVGETERKDEIGVHVIRGGDIVGDHSVLFAGNFECIEVSHRAYDRAVFAQGAVRAARWVVGREPRIYGMQDVLGL.

Residue Gly-8–Met-13 participates in NAD(+) binding. An NADP(+)-binding site is contributed by Arg-36. NAD(+) contacts are provided by residues Gly-89–Thr-91 and Ser-114–Phe-117. His-146 functions as the Proton donor/acceptor in the catalytic mechanism. His-147 provides a ligand contact to (S)-2,3,4,5-tetrahydrodipicolinate. The active-site Proton donor is Lys-150. Gly-156 to Thr-157 is a binding site for (S)-2,3,4,5-tetrahydrodipicolinate.

This sequence belongs to the DapB family.

It is found in the cytoplasm. It carries out the reaction (S)-2,3,4,5-tetrahydrodipicolinate + NAD(+) + H2O = (2S,4S)-4-hydroxy-2,3,4,5-tetrahydrodipicolinate + NADH + H(+). The catalysed reaction is (S)-2,3,4,5-tetrahydrodipicolinate + NADP(+) + H2O = (2S,4S)-4-hydroxy-2,3,4,5-tetrahydrodipicolinate + NADPH + H(+). Its pathway is amino-acid biosynthesis; L-lysine biosynthesis via DAP pathway; (S)-tetrahydrodipicolinate from L-aspartate: step 4/4. Functionally, catalyzes the conversion of 4-hydroxy-tetrahydrodipicolinate (HTPA) to tetrahydrodipicolinate. The polypeptide is 4-hydroxy-tetrahydrodipicolinate reductase (Methanoculleus marisnigri (strain ATCC 35101 / DSM 1498 / JR1)).